The chain runs to 122 residues: Large ribosomal subunit protein uL24 (122 aa).

This sequence belongs to the universal ribosomal protein uL24 family. Part of the 50S ribosomal subunit.

In terms of biological role, one of two assembly initiator proteins, it binds directly to the 5'-end of the 23S rRNA, where it nucleates assembly of the 50S subunit. Functionally, one of the proteins that surrounds the polypeptide exit tunnel on the outside of the subunit. This is Large ribosomal subunit protein uL24 from Renibacterium salmoninarum (strain ATCC 33209 / DSM 20767 / JCM 11484 / NBRC 15589 / NCIMB 2235).